Consider the following 176-residue polypeptide: tRNA (cytidine(56)-2'-O)-methyltransferase (176 aa).

Residues Leu86 and 111–115 (GAEKV) each bind S-adenosyl-L-methionine.

Belongs to the aTrm56 family. As to quaternary structure, homodimer.

It is found in the cytoplasm. The catalysed reaction is cytidine(56) in tRNA + S-adenosyl-L-methionine = 2'-O-methylcytidine(56) in tRNA + S-adenosyl-L-homocysteine + H(+). Specifically catalyzes the AdoMet-dependent 2'-O-ribose methylation of cytidine at position 56 in tRNAs. The chain is tRNA (cytidine(56)-2'-O)-methyltransferase from Methanoregula boonei (strain DSM 21154 / JCM 14090 / 6A8).